Reading from the N-terminus, the 142-residue chain is Baculoviral IAP repeat-containing protein 5 (142 aa).

The BIR repeat unit spans residues 18-88 (RISTFKNWPF…KHSSGCAFLS (71 aa)). Residue S20 is modified to Phosphoserine; by AURKC. K23 is modified (N6-acetyllysine). T34 carries the post-translational modification Phosphothreonine; by CDK1 and CDK15. At T48 the chain carries Phosphothreonine. Zn(2+) contacts are provided by C57, C60, H77, and C84. N6-acetyllysine occurs at positions 90, 110, 112, and 115. T117 is subject to Phosphothreonine; by AURKB. K129 is subject to N6-acetyllysine.

The protein belongs to the IAP family. Monomer or homodimer. Exists as a homodimer in the apo state and as a monomer in the CPC-bound state. The monomer protects cells against apoptosis more efficiently than the dimer. Only the dimeric form is capable of enhancing tubulin stability in cells. When phosphorylated, interacts with LAMTOR5/HBXIP; the resulting complex binds pro-CASP9, as well as active CASP9, but much less efficiently. Component of the chromosomal passenger complex (CPC) composed of at least BIRC5/survivin, CDCA8/borealin, INCENP, AURKB or AURKC; in the complex forms a triple-helix bundle-based subcomplex with INCENP and CDCA8. Interacts with JTB. Interacts (via BIR domain) with histone H3 phosphorylated at 'Thr-3' (H3pT3). Interacts with EVI5. Interacts with GTP-bound RAN in both the S and M phases of the cell cycle. Interacts with USP9X. Interacts with tubulin. Interacts with BIRC2/c-IAP1. The acetylated form at Lys-129 interacts with STAT3. The monomeric form deacetylated at Lys-129 interacts with XPO1/CRM1. The monomeric form interacts with XIAP/BIRC4. Both the dimeric and monomeric form can interact with DIABLO/SMAC. Interacts with BIRC6/bruce. Interacts with FBXL7; this interaction facilitates the polyubiquitination and subsequent proteasomal degradation of BIRC5 by the SCF(FBXL7) E3 ubiquitin-protein ligase complex. In terms of processing, ubiquitinated by the Cul9-RING ubiquitin-protein ligase complex, leading to its degradation. Ubiquitination is required for centrosomal targeting. Deubiquitinated by USP35 or USP38; leading to stabilization. Post-translationally, acetylation at Lys-129 results in its homodimerization, while deacetylation promotes the formation of monomers which heterodimerize with XPO1/CRM1 which facilitates its nuclear export. The acetylated form represses STAT3 transactivation. The dynamic equilibrium between its acetylation and deacetylation at Lys-129 determines its interaction with XPO1/CRM1, its subsequent subcellular localization, and its ability to inhibit STAT3 transactivation. In vitro phosphorylation at Thr-117 by AURKB prevents interaction with INCENP and localization to mitotic chromosomes. Phosphorylation at Thr-48 by CK2 is critical for its mitotic and anti-apoptotic activities. Phosphorylation at Thr-34 by CDK15 is critical for its anti-apoptotic activity. Phosphorylation at Ser-20 by AURKC is critical for regulation of proper chromosome alignment and segregation, and possibly cytokinesis.

It is found in the cytoplasm. It localises to the nucleus. The protein localises to the chromosome. Its subcellular location is the centromere. The protein resides in the cytoskeleton. It is found in the spindle. It localises to the kinetochore. The protein localises to the midbody. Functionally, multitasking protein that has dual roles in promoting cell proliferation and preventing apoptosis. Component of a chromosome passage protein complex (CPC) which is essential for chromosome alignment and segregation during mitosis and cytokinesis. Acts as an important regulator of the localization of this complex; directs CPC movement to different locations from the inner centromere during prometaphase to midbody during cytokinesis and participates in the organization of the center spindle by associating with polymerized microtubules. Involved in the recruitment of CPC to centromeres during early mitosis via association with histone H3 phosphorylated at 'Thr-3' (H3pT3) during mitosis. The complex with RAN plays a role in mitotic spindle formation by serving as a physical scaffold to help deliver the RAN effector molecule TPX2 to microtubules. May counteract a default induction of apoptosis in G2/M phase. The acetylated form represses STAT3 transactivation of target gene promoters. May play a role in neoplasia. Inhibitor of CASP3 and CASP7. Essential for the maintenance of mitochondrial integrity and function. The polypeptide is Baculoviral IAP repeat-containing protein 5 (BIRC5) (Pongo abelii (Sumatran orangutan)).